Here is a 64-residue protein sequence, read N- to C-terminus: Conotoxin Im11.4 (64 aa).

The signal sequence occupies residues 1 to 26; the sequence is MMFRLTSVSCILLVIAFLNLVGLTNA. Cystine bridges form between cysteine 27–cysteine 41, cysteine 34–cysteine 46, cysteine 40–cysteine 50, and cysteine 45–cysteine 54. Position 57 is a histidine amide (histidine 57). A propeptide spanning residues 61-64 is cleaved from the precursor; it reads ATFQ.

Belongs to the conotoxin I2 superfamily. As to expression, expressed by the venom duct.

The protein localises to the secreted. The protein is Conotoxin Im11.4 of Conus imperialis (Imperial cone).